The chain runs to 229 residues: MFTVGLTGGIGSGKSAVSACLAARGALLIDADQVARDVVAPGTPGLAAVLAEFGTELANADGGLDREALGRIVFADPAARGRLEAIVHPLIREETARRMGEVSPSGIAVHDIPLLVEVHAEGTYDVVLVVEAPRELRLHRLEGRGLPRDQALARMANQATDSQRRAAADIVVDNGGSLDDLDARIEEVWQDLLARRDAKATAKATAKAETVASGTDTAASGTDTAAPAG.

One can recognise a DPCK domain in the interval 3 to 203 (TVGLTGGIGS…ARRDAKATAK (201 aa)). Position 11–16 (11–16 (GSGKSA)) interacts with ATP. The interval 203-229 (KATAKAETVASGTDTAASGTDTAAPAG) is disordered.

The protein belongs to the CoaE family.

It is found in the cytoplasm. The catalysed reaction is 3'-dephospho-CoA + ATP = ADP + CoA + H(+). The protein operates within cofactor biosynthesis; coenzyme A biosynthesis; CoA from (R)-pantothenate: step 5/5. Its function is as follows. Catalyzes the phosphorylation of the 3'-hydroxyl group of dephosphocoenzyme A to form coenzyme A. The sequence is that of Dephospho-CoA kinase from Frankia casuarinae (strain DSM 45818 / CECT 9043 / HFP020203 / CcI3).